Here is a 130-residue protein sequence, read N- to C-terminus: MSGRGKQGGKARAKAKTRSSRAGLQFPVGRVHRLLRKGNYSERVGAGAPVYLAAVLEYLTAEILELAGNAARDNKKTRIIPRHLQLAIRNDEELNKLLGRVTIAQGGVLPNIQAVLLPKKTESHHKAKGK.

The disordered stretch occupies residues 1–22 (MSGRGKQGGKARAKAKTRSSRA). The residue at position 2 (S2) is an N-acetylserine. Residue S2 is modified to Phosphoserine; by RPS6KA5. R4 is subject to Citrulline; alternate. Position 4 is a symmetric dimethylarginine; by PRMT5; alternate (R4). N6-(2-hydroxyisobutyryl)lysine; alternate is present on residues K6 and K10. K6 bears the N6-acetyllysine; alternate mark. A compositionally biased stretch (basic residues) spans 7 to 19 (QGGKARAKAKTRS). 2 positions are modified to N6-(beta-hydroxybutyryl)lysine; alternate: K10 and K14. K10 is modified (N6-lactoyllysine; alternate). The residue at position 10 (K10) is an N6-succinyllysine; alternate. K14 is covalently cross-linked (Glycyl lysine isopeptide (Lys-Gly) (interchain with G-Cter in ubiquitin); alternate). A Glycyl lysine isopeptide (Lys-Gly) (interchain with G-Cter in ubiquitin) cross-link involves residue K16. The residue at position 37 (K37) is an N6-(2-hydroxyisobutyryl)lysine; alternate. Residue K37 is modified to N6-(beta-hydroxybutyryl)lysine; alternate. Residue K37 is modified to N6-crotonyllysine; alternate. N6-(2-hydroxyisobutyryl)lysine is present on residues K75 and K76. N6-(2-hydroxyisobutyryl)lysine; alternate is present on K96. The residue at position 96 (K96) is an N6-(beta-hydroxybutyryl)lysine; alternate. Position 96 is an N6-succinyllysine; alternate (K96). K96 carries the post-translational modification N6-glutaryllysine; alternate. Q105 bears the N5-methylglutamine mark. Residue K119 is modified to N6-(2-hydroxyisobutyryl)lysine; alternate. N6-(beta-hydroxybutyryl)lysine; alternate is present on K119. K119 and K120 each carry N6-crotonyllysine; alternate. 2 positions are modified to N6-glutaryllysine; alternate: K119 and K120. Residue K120 forms a Glycyl lysine isopeptide (Lys-Gly) (interchain with G-Cter in ubiquitin); alternate linkage. T121 is subject to Phosphothreonine; by DCAF1. K126 carries the N6-crotonyllysine; alternate modification. K126 is modified (N6-glutaryllysine; alternate).

The protein belongs to the histone H2A family. As to quaternary structure, the nucleosome is a histone octamer containing two molecules each of H2A, H2B, H3 and H4 assembled in one H3-H4 heterotetramer and two H2A-H2B heterodimers. The octamer wraps approximately 147 bp of DNA. Post-translationally, deiminated on Arg-4 in granulocytes upon calcium entry. Monoubiquitination of Lys-120 (H2AK119Ub) by RING1, TRIM37 and RNF2/RING2 complex gives a specific tag for epigenetic transcriptional repression and participates in X chromosome inactivation of female mammals. It is involved in the initiation of both imprinted and random X inactivation. Ubiquitinated H2A is enriched in inactive X chromosome chromatin. Ubiquitination of H2A functions downstream of methylation of 'Lys-27' of histone H3 (H3K27me). H2AK119Ub by RNF2/RING2 can also be induced by ultraviolet and may be involved in DNA repair. Monoubiquitination of Lys-120 (H2AK119Ub) by TRIM37 may promote transformation of cells in a number of breast cancers. Following DNA double-strand breaks (DSBs), it is ubiquitinated through 'Lys-63' linkage of ubiquitin moieties by the E2 ligase UBE2N and the E3 ligases RNF8 and RNF168, leading to the recruitment of repair proteins to sites of DNA damage. Ubiquitination at Lys-14 and Lys-16 (H2AK13Ub and H2AK15Ub, respectively) in response to DNA damage is initiated by RNF168 that mediates monoubiquitination at these 2 sites, and 'Lys-63'-linked ubiquitin are then conjugated to monoubiquitin; RNF8 is able to extend 'Lys-63'-linked ubiquitin chains in vitro. Deubiquitinated by USP51 at Lys-14 and Lys-16 (H2AK13Ub and H2AK15Ub, respectively) after damaged DNA is repaired. H2AK119Ub and ionizing radiation-induced 'Lys-63'-linked ubiquitination (H2AK13Ub and H2AK15Ub) are distinct events. In terms of processing, phosphorylation on Ser-2 (H2AS1ph) is enhanced during mitosis. Phosphorylation on Ser-2 by RPS6KA5/MSK1 directly represses transcription. Acetylation of H3 inhibits Ser-2 phosphorylation by RPS6KA5/MSK1. Phosphorylation at Thr-121 (H2AT120ph) by DCAF1 is present in the regulatory region of many tumor suppresor genes and down-regulates their transcription. Post-translationally, glutamine methylation at Gln-105 (H2AQ104me) by FBL is specifically dedicated to polymerase I. It is present at 35S ribosomal DNA locus and impairs binding of the FACT complex. Symmetric dimethylation on Arg-4 by the PRDM1/PRMT5 complex may play a crucial role in the germ-cell lineage. In terms of processing, crotonylation (Kcr) is specifically present in male germ cells and marks testis-specific genes in post-meiotic cells, including X-linked genes that escape sex chromosome inactivation in haploid cells. Crotonylation marks active promoters and enhancers and confers resistance to transcriptional repressors. It is also associated with post-meiotically activated genes on autosomes. Post-translationally, lactylated in macrophages by EP300/P300 by using lactoyl-CoA directly derived from endogenous or exogenous lactate, leading to stimulates gene transcription.

It localises to the nucleus. It is found in the chromosome. In terms of biological role, core component of nucleosome. Nucleosomes wrap and compact DNA into chromatin, limiting DNA accessibility to the cellular machineries which require DNA as a template. Histones thereby play a central role in transcription regulation, DNA repair, DNA replication and chromosomal stability. DNA accessibility is regulated via a complex set of post-translational modifications of histones, also called histone code, and nucleosome remodeling. This chain is Histone H2A type 1-B/E, found in Homo sapiens (Human).